The chain runs to 309 residues: tRNA dimethylallyltransferase (309 aa).

Position 10–17 (10–17 (GPTAVGKT)) interacts with ATP. Position 12–17 (12–17 (TAVGKT)) interacts with substrate. The interaction with substrate tRNA stretch occupies residues 35–38 (DSMQ).

Belongs to the IPP transferase family. Monomer. Requires Mg(2+) as cofactor.

It carries out the reaction adenosine(37) in tRNA + dimethylallyl diphosphate = N(6)-dimethylallyladenosine(37) in tRNA + diphosphate. In terms of biological role, catalyzes the transfer of a dimethylallyl group onto the adenine at position 37 in tRNAs that read codons beginning with uridine, leading to the formation of N6-(dimethylallyl)adenosine (i(6)A). The chain is tRNA dimethylallyltransferase from Clostridium beijerinckii (strain ATCC 51743 / NCIMB 8052) (Clostridium acetobutylicum).